The following is a 169-amino-acid chain: NADH-quinone oxidoreductase subunit B (169 aa).

Positions 42, 43, 107, and 136 each coordinate [4Fe-4S] cluster.

It belongs to the complex I 20 kDa subunit family. In terms of assembly, NDH-1 is composed of 14 different subunits. Subunits NuoB, C, D, E, F, and G constitute the peripheral sector of the complex. [4Fe-4S] cluster is required as a cofactor.

It is found in the cell inner membrane. The catalysed reaction is a quinone + NADH + 5 H(+)(in) = a quinol + NAD(+) + 4 H(+)(out). In terms of biological role, NDH-1 shuttles electrons from NADH, via FMN and iron-sulfur (Fe-S) centers, to quinones in the respiratory chain. The immediate electron acceptor for the enzyme in this species is believed to be ubiquinone. Couples the redox reaction to proton translocation (for every two electrons transferred, four hydrogen ions are translocated across the cytoplasmic membrane), and thus conserves the redox energy in a proton gradient. The protein is NADH-quinone oxidoreductase subunit B of Helicobacter hepaticus (strain ATCC 51449 / 3B1).